A 198-amino-acid polypeptide reads, in one-letter code: Mitrocomin (198 aa).

A propeptide spanning residues 1–8 is cleaved from the precursor; that stretch reads MSMGSRYA. EF-hand domains lie at 19 to 54, 118 to 147, and 148 to 183; these read KWIARHKHMFNFLDINSNGQINLNEMVHKASNIICK, DALFDIIDKDRNGSVSLDEWIQYTHCAGIQ, and QSRGQCEATFAHCDLDGDGKLDVDEMTRQHLGFWYS. Ca(2+) is bound by residues Asp-32, Asn-34, Asn-36, Gln-38, Glu-43, Asp-125, Asp-127, Asn-129, Ser-131, Glu-136, Asp-161, Asp-163, Asp-165, Lys-167, and Glu-172.

The protein belongs to the aequorin family.

Ca(2+)-dependent bioluminescence photoprotein. Displays an emission peak at 470 nm (blue light). Trace amounts of calcium ion trigger the intramolecular oxidation of the chromophore, coelenterazine into coelenteramide and CO(2) with the concomitant emission of light. The sequence is that of Mitrocomin (MI17) from Mitrocoma cellularia (Cross jellyfish).